Consider the following 156-residue polypeptide: Small ribosomal subunit protein uS7 (156 aa).

This sequence belongs to the universal ribosomal protein uS7 family. Part of the 30S ribosomal subunit. Contacts proteins S9 and S11.

In terms of biological role, one of the primary rRNA binding proteins, it binds directly to 16S rRNA where it nucleates assembly of the head domain of the 30S subunit. Is located at the subunit interface close to the decoding center, probably blocks exit of the E-site tRNA. The protein is Small ribosomal subunit protein uS7 of Anaeromyxobacter sp. (strain Fw109-5).